We begin with the raw amino-acid sequence, 144 residues long: Transcription antitermination protein NusB (144 aa).

This sequence belongs to the NusB family.

Involved in transcription antitermination. Required for transcription of ribosomal RNA (rRNA) genes. Binds specifically to the boxA antiterminator sequence of the ribosomal RNA (rrn) operons. This chain is Transcription antitermination protein NusB, found in Haemophilus influenzae (strain 86-028NP).